Consider the following 99-residue polypeptide: Large ribosomal subunit protein uL23 (99 aa).

Belongs to the universal ribosomal protein uL23 family. As to quaternary structure, part of the 50S ribosomal subunit. Contacts protein L29, and trigger factor when it is bound to the ribosome.

Its function is as follows. One of the early assembly proteins it binds 23S rRNA. One of the proteins that surrounds the polypeptide exit tunnel on the outside of the ribosome. Forms the main docking site for trigger factor binding to the ribosome. This chain is Large ribosomal subunit protein uL23, found in Alkalilimnicola ehrlichii (strain ATCC BAA-1101 / DSM 17681 / MLHE-1).